The primary structure comprises 388 residues: S-adenosylmethionine synthase (388 aa).

Histidine 16 is a binding site for ATP. Aspartate 18 lines the Mg(2+) pocket. Position 44 (glutamate 44) interacts with K(+). L-methionine-binding residues include glutamate 57 and glutamine 100. A flexible loop region spans residues 100-110 (QSPEIAQGVDR). Residues 165–167 (DAK), aspartate 240, 246–247 (RK), alanine 263, and lysine 267 contribute to the ATP site. Aspartate 240 contacts L-methionine. Lysine 271 provides a ligand contact to L-methionine.

The protein belongs to the AdoMet synthase family. In terms of assembly, homotetramer; dimer of dimers. Mg(2+) serves as cofactor. The cofactor is K(+).

It is found in the cytoplasm. The catalysed reaction is L-methionine + ATP + H2O = S-adenosyl-L-methionine + phosphate + diphosphate. It participates in amino-acid biosynthesis; S-adenosyl-L-methionine biosynthesis; S-adenosyl-L-methionine from L-methionine: step 1/1. Its function is as follows. Catalyzes the formation of S-adenosylmethionine (AdoMet) from methionine and ATP. The overall synthetic reaction is composed of two sequential steps, AdoMet formation and the subsequent tripolyphosphate hydrolysis which occurs prior to release of AdoMet from the enzyme. This is S-adenosylmethionine synthase from Acinetobacter baylyi (strain ATCC 33305 / BD413 / ADP1).